The primary structure comprises 354 residues: Ferrochelatase (354 aa).

Residues His214 and Glu295 each contribute to the Fe cation site.

This sequence belongs to the ferrochelatase family.

The protein localises to the cytoplasm. The catalysed reaction is heme b + 2 H(+) = protoporphyrin IX + Fe(2+). It participates in porphyrin-containing compound metabolism; protoheme biosynthesis; protoheme from protoporphyrin-IX: step 1/1. Catalyzes the ferrous insertion into protoporphyrin IX. The chain is Ferrochelatase from Burkholderia lata (strain ATCC 17760 / DSM 23089 / LMG 22485 / NCIMB 9086 / R18194 / 383).